Reading from the N-terminus, the 318-residue chain is Ribose-phosphate pyrophosphokinase 3 (318 aa).

Arginine 96–aspartate 101 serves as a coordination point for ATP. Mg(2+) is bound by residues aspartate 128, histidine 130, aspartate 139, and aspartate 143. Position 130 (histidine 130) interacts with ATP. The tract at residues asparagine 212–valine 227 is binding of phosphoribosylpyrophosphate.

Belongs to the ribose-phosphate pyrophosphokinase family. As to quaternary structure, homodimer. The active form is probably a hexamer composed of 3 homodimers. The cofactor is Mg(2+). In terms of tissue distribution, testis.

It carries out the reaction D-ribose 5-phosphate + ATP = 5-phospho-alpha-D-ribose 1-diphosphate + AMP + H(+). It functions in the pathway metabolic intermediate biosynthesis; 5-phospho-alpha-D-ribose 1-diphosphate biosynthesis; 5-phospho-alpha-D-ribose 1-diphosphate from D-ribose 5-phosphate (route I): step 1/1. With respect to regulation, activated by magnesium and inorganic phosphate. Functionally, catalyzes the synthesis of phosphoribosylpyrophosphate (PRPP) that is essential for nucleotide synthesis. This is Ribose-phosphate pyrophosphokinase 3 (PRPS1L1) from Homo sapiens (Human).